Reading from the N-terminus, the 446-residue chain is Dihydroorotate dehydrogenase (quinone), mitochondrial (446 aa).

The transit peptide at 1 to 13 directs the protein to the mitochondrion; that stretch reads MHSRPLPTLGRHA. The helical transmembrane segment at 40-57 threads the bilayer; the sequence is AILYTAGILGGAFAGYYL. Residues 125 to 129 and S149 each bind FMN; that span reads AGLDK. K129 contacts substrate. 174–178 serves as a coordination point for substrate; that stretch reads NRYGF. The FMN site is built by N222 and N252. Substrate-binding positions include N252 and 252–257; that span reads NVSSPN. S255 functions as the Nucleophile in the catalytic mechanism. FMN-binding residues include K303 and S331. 332-333 contributes to the substrate binding site; it reads NT. FMN is bound by residues G357, G387, and 408-409; that span reads YT.

Belongs to the dihydroorotate dehydrogenase family. Type 2 subfamily. The cofactor is FMN.

The protein localises to the mitochondrion inner membrane. It carries out the reaction (S)-dihydroorotate + a quinone = orotate + a quinol. Its pathway is pyrimidine metabolism; UMP biosynthesis via de novo pathway; orotate from (S)-dihydroorotate (quinone route): step 1/1. With respect to regulation, the activity is dependent of the presence of oxygen. Functionally, catalyzes the conversion of dihydroorotate to orotate with quinone as electron acceptor. This Lachancea kluyveri (strain ATCC 58438 / CBS 3082 / BCRC 21498 / NBRC 1685 / JCM 7257 / NCYC 543 / NRRL Y-12651) (Yeast) protein is Dihydroorotate dehydrogenase (quinone), mitochondrial (URA9).